The chain runs to 48 residues: Sperm protamine R3 isoform 1 (48 aa).

A compositionally biased stretch (basic residues) spans 1-29; that stretch reads ARRRHSMKKKRKSVRRRKTRKNQRKRKNS. Residues 1–48 are disordered; the sequence is ARRRHSMKKKRKSVRRRKTRKNQRKRKNSLGRSFKQHGFLKQPPRFRP.

In terms of tissue distribution, testis.

The protein resides in the nucleus. Its subcellular location is the chromosome. Functionally, protamines substitute for histones in the chromatin of sperm during the haploid phase of spermatogenesis. They compact sperm DNA into a highly condensed, stable and inactive complex. The polypeptide is Sperm protamine R3 isoform 1 (Hydrolagus colliei (Spotted ratfish)).